A 376-amino-acid polypeptide reads, in one-letter code: Succinyl-diaminopimelate desuccinylase (376 aa).

Residue His67 coordinates Zn(2+). Asp69 is an active-site residue. Asp100 is a binding site for Zn(2+). Catalysis depends on Glu134, which acts as the Proton acceptor. Positions 135, 163, and 349 each coordinate Zn(2+).

Belongs to the peptidase M20A family. DapE subfamily. Homodimer. The cofactor is Zn(2+). Co(2+) is required as a cofactor.

It carries out the reaction N-succinyl-(2S,6S)-2,6-diaminopimelate + H2O = (2S,6S)-2,6-diaminopimelate + succinate. It participates in amino-acid biosynthesis; L-lysine biosynthesis via DAP pathway; LL-2,6-diaminopimelate from (S)-tetrahydrodipicolinate (succinylase route): step 3/3. Functionally, catalyzes the hydrolysis of N-succinyl-L,L-diaminopimelic acid (SDAP), forming succinate and LL-2,6-diaminopimelate (DAP), an intermediate involved in the bacterial biosynthesis of lysine and meso-diaminopimelic acid, an essential component of bacterial cell walls. This Nitrosomonas europaea (strain ATCC 19718 / CIP 103999 / KCTC 2705 / NBRC 14298) protein is Succinyl-diaminopimelate desuccinylase.